We begin with the raw amino-acid sequence, 342 residues long: Autoinducer 2 import system permease protein LsrC (342 aa).

The Periplasmic portion of the chain corresponds to 1 to 13; the sequence is MLKFIQNNREITA. Residues 14–34 form a helical membrane-spanning segment; the sequence is LLAVVLLFVLPGFLDRQYLSV. The Cytoplasmic portion of the chain corresponds to 35–38; that stretch reads QTLT. Residues 39-59 form a helical membrane-spanning segment; the sequence is MVYSSAQILILLAMGATLVML. At 60-69 the chain is on the periplasmic side; the sequence is TRNIDVSVGS. A helical membrane pass occupies residues 70–90; the sequence is ITGMCAVLLGMLLNAGYSLPV. The Cytoplasmic portion of the chain corresponds to 91 to 92; sequence AC. The chain crosses the membrane as a helical span at residues 93 to 113; it reads VATLLLGLLAGFFNGVLVAWL. Residue Lys114 is a topological domain, periplasmic. A helical transmembrane segment spans residues 115 to 135; sequence IPAIVATLGTLGLYRGIMLLW. At 136 to 154 the chain is on the cytoplasmic side; it reads TGGKWIEGLPAELKQLSAP. The helical transmembrane segment at 155–175 threads the bilayer; it reads LLFGVSAIGWLTIILVAFMAW. Residues 176-212 lie on the Periplasmic side of the membrane; sequence LLAKTAFGRSFYVTGDNLQGARQLGVRTEAIRIVAFS. The chain crosses the membrane as a helical span at residues 213-233; it reads LNGCMAALAGIVFASQIGFIP. Over 234–251 the chain is Cytoplasmic; it reads NQTGTGLEMKAIAACVLG. The chain crosses the membrane as a helical span at residues 252-272; the sequence is GISLLGGSGAIIGAVLGAWFL. At 273-283 the chain is on the periplasmic side; sequence TQIDSVLVLLR. The chain crosses the membrane as a helical span at residues 284 to 304; sequence IPAWWNDFIAGMVLLAVLVFD. Residues 305-342 are Cytoplasmic-facing; sequence GRLRCALERNLRRQKYARFMMPPPPVKPASSGKKREAA.

Belongs to the binding-protein-dependent transport system permease family. AraH/RbsC subfamily. The complex is composed of two ATP-binding proteins (LsrA), two transmembrane proteins (LsrC and LsrD) and a solute-binding protein (LsrB).

It localises to the cell inner membrane. Functionally, part of the ABC transporter complex LsrABCD involved in autoinducer 2 (AI-2) import. Probably responsible for the translocation of the substrate across the membrane. This chain is Autoinducer 2 import system permease protein LsrC (lsrC), found in Escherichia coli (strain SMS-3-5 / SECEC).